The following is a 189-amino-acid chain: GMP synthase [glutamine-hydrolyzing] subunit A (189 aa).

One can recognise a Glutamine amidotransferase type-1 domain in the interval 1–189 (MIVILNNGGQ…CKKCGFEFEE (189 aa)). Cys-76 acts as the Nucleophile in catalysis. Catalysis depends on residues His-163 and Glu-165.

As to quaternary structure, heterodimer composed of a glutamine amidotransferase subunit (A) and a GMP-binding subunit (B).

The catalysed reaction is XMP + L-glutamine + ATP + H2O = GMP + L-glutamate + AMP + diphosphate + 2 H(+). The protein operates within purine metabolism; GMP biosynthesis; GMP from XMP (L-Gln route): step 1/1. Functionally, catalyzes the synthesis of GMP from XMP. This chain is GMP synthase [glutamine-hydrolyzing] subunit A, found in Methanococcus maripaludis (strain C7 / ATCC BAA-1331).